Consider the following 642-residue polypeptide: Threonine--tRNA ligase (642 aa).

A TGS domain is found at 1–61 (MPVVTLPDGS…DSDANLAIIT (61 aa)). The catalytic stretch occupies residues 243-534 (DHRKIGKQLD…LTEEYAGFFP (292 aa)). Residues Cys334, His385, and His511 each contribute to the Zn(2+) site.

The protein belongs to the class-II aminoacyl-tRNA synthetase family. Homodimer. Requires Zn(2+) as cofactor.

Its subcellular location is the cytoplasm. The catalysed reaction is tRNA(Thr) + L-threonine + ATP = L-threonyl-tRNA(Thr) + AMP + diphosphate + H(+). Catalyzes the attachment of threonine to tRNA(Thr) in a two-step reaction: L-threonine is first activated by ATP to form Thr-AMP and then transferred to the acceptor end of tRNA(Thr). Also edits incorrectly charged L-seryl-tRNA(Thr). In Photorhabdus laumondii subsp. laumondii (strain DSM 15139 / CIP 105565 / TT01) (Photorhabdus luminescens subsp. laumondii), this protein is Threonine--tRNA ligase.